The following is a 343-amino-acid chain: Anthranilate phosphoribosyltransferase (343 aa).

Residues glycine 84, 87–88 (GD), threonine 92, 94–97 (NIST), 112–120 (KHGNRSASS), and serine 124 each bind 5-phospho-alpha-D-ribose 1-diphosphate. Residue glycine 84 participates in anthranilate binding. Serine 96 serves as a coordination point for Mg(2+). Residue asparagine 115 participates in anthranilate binding. An anthranilate-binding site is contributed by arginine 170. Mg(2+) contacts are provided by aspartate 229 and glutamate 230.

The protein belongs to the anthranilate phosphoribosyltransferase family. As to quaternary structure, homodimer. Requires Mg(2+) as cofactor.

It carries out the reaction N-(5-phospho-beta-D-ribosyl)anthranilate + diphosphate = 5-phospho-alpha-D-ribose 1-diphosphate + anthranilate. The protein operates within amino-acid biosynthesis; L-tryptophan biosynthesis; L-tryptophan from chorismate: step 2/5. In terms of biological role, catalyzes the transfer of the phosphoribosyl group of 5-phosphorylribose-1-pyrophosphate (PRPP) to anthranilate to yield N-(5'-phosphoribosyl)-anthranilate (PRA). The sequence is that of Anthranilate phosphoribosyltransferase from Bordetella pertussis (strain Tohama I / ATCC BAA-589 / NCTC 13251).